Reading from the N-terminus, the 820-residue chain is Serine/threonine-protein phosphatase 4 regulatory subunit 3B (820 aa).

In terms of domain architecture, WH1 spans 1–100 (MSDTRRRVKV…DEIWEKICQV (100 aa)). S117 and S663 each carry phosphoserine. Residues 687 to 820 (EDDDEEGKAV…SPRKRPRLGS (134 aa)) form a disordered region. A compositionally biased stretch (basic and acidic residues) spans 701–732 (EKSKTEDDFPDSYEKFMETKKAKESEDKENLP). The span at 744 to 789 (FSHSPSATNGTNSTNSKSVVSQTTPASSNVASSKTTSLATSVTATK) shows a compositional bias: polar residues. Residues 798 to 809 (YPDDEEEDEEEE) show a composition bias toward acidic residues. At S811 the chain carries Phosphoserine.

It belongs to the SMEK family. As to quaternary structure, serine/threonine-protein phosphatase 4 (PP4) occurs in different assemblies of the catalytic and one or more regulatory subunits. Component of the PP4 complex PPP4C-PPP4R2-PPP4R3B.

It is found in the cytoplasm. The protein localises to the cytoskeleton. Its subcellular location is the microtubule organizing center. It localises to the centrosome. The protein resides in the nucleus. Its function is as follows. Regulatory subunit of serine/threonine-protein phosphatase 4 (PP4). May regulate the activity of PPP4C at centrosomal microtubule organizing centers. In Mus musculus (Mouse), this protein is Serine/threonine-protein phosphatase 4 regulatory subunit 3B.